Reading from the N-terminus, the 292-residue chain is uncharacterized protein (292 aa).

It belongs to the glycosyltransferase 2 family. WaaE/KdtX subfamily.

This is an uncharacterized protein from Rickettsia prowazekii (strain Madrid E).